A 132-amino-acid polypeptide reads, in one-letter code: MAREFKRSDRVAQEIQKEIAVILQREVKDPRIGMVTVSDVEVSSDLAYAKVFVTFLFDNDESAIDAGMKGLEKASPYIRSLLGKAMRLRIVPEIRFIYDRSLIEGMRMSNLVSNVIREDNARHIDDDVSEEK.

Belongs to the RbfA family. Monomer. Binds 30S ribosomal subunits, but not 50S ribosomal subunits or 70S ribosomes.

It is found in the cytoplasm. One of several proteins that assist in the late maturation steps of the functional core of the 30S ribosomal subunit. Associates with free 30S ribosomal subunits (but not with 30S subunits that are part of 70S ribosomes or polysomes). Required for efficient processing of 16S rRNA. May interact with the 5'-terminal helix region of 16S rRNA. The chain is Ribosome-binding factor A from Pasteurella multocida (strain Pm70).